Reading from the N-terminus, the 538-residue chain is MQETGVRNGAFGADKFGLKNLKQVHWNLGAPQLYQYSLSAGEAVLSADGALCADTGEFTGRSPKDKFTVRDATTDKKMWWAGNQSITAEQFETLYQDFLKHAEGKSLFAQDLYGGADPAYRIKTRVFTELAWHSLFIRTLLIRPEAIELSTFTPELTIIDMPSFRADPKRHGCKSENVVAIDFARKIVLIGGSYYAGEMKKSVFTTLNYYLPERGVMPMHCSANVGAKDDAAIFFGLSGTGKTTLSADPNRTLIGDDEHGWGPNGVFNFEGGCYAKCIKLSQEAEPQIYAASTRFGAVLENCVLDEDTRVVDFDDGSKTENTRSAYPLDFIPNASRTGRAPQPKNVVMLAADAFGVLPPIAKLSPAQAMYHFLSGYTAKVAGTERGLGNEPQPEFSTCFGSPFLPLDPSVYGNMLRDLIAQHNVDCWLVNTGWTGGKYGTGSRMPIKVTRALLTAALDGSLRNVEFRTDKYFGFAVPTALPGVPSEILNPVNTWKDKDEFDKTARALVGMFQKNFAKFEAQVDAEVRAAAPDVKLAAE.

Substrate is bound by residues Arg61, Tyr195, and Lys201. ATP is bound by residues Lys201, His220, and 236–244; that span reads GLSGTGKTT. The Mn(2+) site is built by Lys201 and His220. Position 257 (Asp257) interacts with Mn(2+). ATP is bound by residues Glu285, Arg323, and Thr449. Arg323 contributes to the substrate binding site.

It belongs to the phosphoenolpyruvate carboxykinase (ATP) family. It depends on Mn(2+) as a cofactor.

It localises to the cytoplasm. The catalysed reaction is oxaloacetate + ATP = phosphoenolpyruvate + ADP + CO2. It participates in carbohydrate biosynthesis; gluconeogenesis. Involved in the gluconeogenesis. Catalyzes the conversion of oxaloacetate (OAA) to phosphoenolpyruvate (PEP) through direct phosphoryl transfer between the nucleoside triphosphate and OAA. The protein is Phosphoenolpyruvate carboxykinase (ATP) of Bradyrhizobium diazoefficiens (strain JCM 10833 / BCRC 13528 / IAM 13628 / NBRC 14792 / USDA 110).